Here is a 133-residue protein sequence, read N- to C-terminus: Small ribosomal subunit protein eS8 (133 aa).

The disordered stretch occupies residues 1–31 (MGFYQGPDNRKITGGLKGKHRDKRKYEIGNP).

The protein belongs to the eukaryotic ribosomal protein eS8 family. Part of the 30S ribosomal subunit.

This Saccharolobus solfataricus (strain ATCC 35092 / DSM 1617 / JCM 11322 / P2) (Sulfolobus solfataricus) protein is Small ribosomal subunit protein eS8.